The chain runs to 1621 residues: ABC transporter A family member 2 (1621 aa).

7 helical membrane-spanning segments follow: residues 30–50, 234–254, 276–296, 309–329, 338–358, 365–385, and 405–425; these read ILFPIIVILVIFAILVLVMAF, SVFITAALMIFGFRLITDLVI, ISWMITSLVTALPVNLIISII, GVVIFTLILYLLTLLLLAFIL, FCGLLSFVIIIAINIGGIFVA, GAKLFLCLISPIAIACSIFAM, and NQVIGMLVLDIFFYIFLVWYL. Positions 484-717 constitute an ABC transporter 1 domain; it reads ISIRNLRKEY…FGCGYLLTCS (234 aa). ATP is bound at residue 520-527; that stretch reads GPNGSGKS. A run of 7 helical transmembrane segments spans residues 856 to 876, 1033 to 1053, 1083 to 1103, 1111 to 1131, 1142 to 1162, 1183 to 1203, and 1227 to 1247; these read FFLTLVIPLVFIIGSIIMYKA, IVYFIIIMMAGYALMAGSFAG, VWDYFFSFILILLTTCILAGI, FGLMFLCLILFCVSVVPLSYL, ATGAITAIHFAIGIIFVIISL, VDIVFCILSPLFAYSRILFLV, and GSPMIILAAHCIVWVSWIMIL. In terms of domain architecture, ABC transporter 2 spans 1293–1528; that stretch reads LQFRNLHKLF…FGAGYTFDVK (236 aa). Position 1331–1338 (1331–1338) interacts with ATP; the sequence is GLNGAGKT.

It belongs to the ABC transporter superfamily. ABCA family.

It is found in the membrane. This Dictyostelium discoideum (Social amoeba) protein is ABC transporter A family member 2 (abcA2).